The chain runs to 437 residues: MQTTQEIQTSQNPLERRIDMSLAVADIDKAVEARLKQMARSVKMPGFRPGKVPLKIVEQTYGPQARSEAIGAAVERAFGEKVREQNLRVAGYPRIEPKEAGSEGALEFSAVFEVYPEVVVGDLSAQSIEQPTLVVGDAEVDKTIDVLRKQRTTFEAAARPTQDGDRVTIDFAGRKDGELFEGGQATDFPFVIGAGSMLKDFETAVVGLGVGETKTFDMTFPEDYHAKHLAGQPVQFEVTLKSVEAPKLPEVDSDFAKALGVADGNVDKLREEVKGNLEREVKRRIQAKVKEQAMDALLAVTPIEVPKALVESEATQLAENAKRDLAARGMNTKDIPVQPAWFGDQAMRRVKLGLIMAEVVKGNELHAKPEQIRGLVEEMAQSYEDPSELVRWYYAQPDRLAQAEAVVIEDNVVAWVLSKAQTSEKSIAFDDLMGNAA.

The region spanning 164–249 is the PPIase FKBP-type domain; it reads GDRVTIDFAG…LKSVEAPKLP (86 aa).

Belongs to the FKBP-type PPIase family. Tig subfamily.

It is found in the cytoplasm. It carries out the reaction [protein]-peptidylproline (omega=180) = [protein]-peptidylproline (omega=0). Involved in protein export. Acts as a chaperone by maintaining the newly synthesized protein in an open conformation. Functions as a peptidyl-prolyl cis-trans isomerase. The protein is Trigger factor of Azoarcus sp. (strain BH72).